The primary structure comprises 84 residues: Large ribosomal subunit protein bL27 (84 aa).

The disordered stretch occupies residues 1–25 (MAHKKAGGSSRNGRDSNGQRRGVKR).

This sequence belongs to the bacterial ribosomal protein bL27 family.

In Desulfatibacillum aliphaticivorans, this protein is Large ribosomal subunit protein bL27.